We begin with the raw amino-acid sequence, 96 residues long: Conantokin Rl-C (96 aa).

Residues 1–21 (MQLYTYLYLLVPLVTFHLILG) form the signal peptide. A propeptide spanning residues 22–78 (TGTLDHGDALTERRSADATALKPEPVLLQKSSARSTDDNGKDTQMKRIFKKRRNKAR) is cleaved from the precursor. The segment at 36 to 85 (SADATALKPEPVLLQKSSARSTDDNGKDTQMKRIFKKRRNKARGEEELSE) is disordered. Residues 56 to 66 (STDDNGKDTQM) are compositionally biased toward basic and acidic residues. An a divalent metal cation-binding site is contributed by glutamate 81. Glutamate 81, glutamate 82, glutamate 85, glutamate 89, and glutamate 93 each carry 4-carboxyglutamate. 3 residues coordinate a divalent metal cation: glutamate 85, glutamate 89, and glutamate 93. Asparagine amide is present on asparagine 96.

The protein belongs to the conotoxin B superfamily. Ca(2+) serves as cofactor. The cofactor is Mg(2+). Expressed by the venom duct.

The protein resides in the secreted. Functionally, conantokins inhibit N-methyl-D-aspartate (NMDA) receptors. This toxin has antagonist activity on NR2B/GRIN2B (IC(50)=1.4 uM) and NR2A/GRIN2A (IC(50)=2.9 uM) subunits, when tested on rat receptors. This is Conantokin Rl-C from Conus rolani (Cone snail).